A 913-amino-acid polypeptide reads, in one-letter code: WD repeat-containing protein 44 (913 aa).

Positions 1–14 (MASESDTEEFYDAP) are enriched in acidic residues. Positions 1–24 (MASESDTEEFYDAPEDVHLGGGYP) are disordered. Ala-2 carries the post-translational modification N-acetylalanine. The binding activity stretch occupies residues 2 to 170 (ASESDTEEFY…SSTEQLNVLE (169 aa)). Ser-3 carries the phosphoserine modification. The short motif at 9–15 (EFYDAPE) is the FFAT-like motif element. Tyr-11 is modified (phosphotyrosine). A phosphoserine mark is found at Ser-27, Ser-50, Ser-66, Ser-71, Ser-81, Ser-96, and Ser-126. A coiled-coil region spans residues 119-184 (EESQKAESQN…VLNKEAVEVK (66 aa)). Phosphothreonine is present on residues Thr-158 and Thr-219. The segment at 205 to 348 (AVEEVAPAKP…RPRSNSGREL (144 aa)) is disordered. Residues 211–257 (PAKPPRHLTPEPDIVASTKKPVPARPPPPTNFPPPRPPPPSRPAPPP) are important for interaction with ARHGAP26 AND ARHGAP10. A compositionally biased stretch (pro residues) spans 233 to 256 (PARPPPPTNFPPPRPPPPSRPAPP). At Ser-262 the chain carries Phosphoserine. Residues 262–278 (SELEFETLKTPDIDVPK) show a composition bias toward basic and acidic residues. Thr-271 is subject to Phosphothreonine. Residues 280 to 311 (NITSDSLLTASMASESTVKDSQPSLDLASATS) show a composition bias toward polar residues. Residues 334-347 (VMGPQRPRSNSGRE) form an important for interaction with RAB11A region. Residues Ser-342 and Ser-344 each carry the phosphoserine; by PKB/AKT1 modification. Thr-349 carries the phosphothreonine modification. Disordered stretches follow at residues 397-424 (SNDA…LKQK) and 459-480 (DEVF…MPYT). 4 positions are modified to phosphoserine: Ser-403, Ser-470, Ser-471, and Ser-472. The segment covering 467-476 (DDPSSSDDEG) has biased composition (acidic residues). Phosphotyrosine is present on Tyr-479. One copy of the WD 1 repeat lies at 509–548 (EHMGAVWTMKFSHCGRLLASAGQDNVVRIWALKNAFDYFN). A disordered region spans residues 557–593 (EGRVSPSPSQESLSSSKSDTDTGVCSGTDEDPDDKNA). Ser-561 and Ser-565 each carry phosphoserine. Low complexity predominate over residues 561–573 (SPSPSQESLSSSK). 6 WD repeats span residues 605–643 (GHTA…CLCC), 645–685 (QHID…VALW), 690–729 (GQTK…YHTQ), 740–779 (KVGR…LSMK), 784–823 (VNSS…SKFT), and 876–913 (VLDA…KNVS).

In terms of assembly, interacts with the GTP-bound form of RAB11A and RAB11B. Interacts with GRAF1/ARHGAP26 or GRAF2/ARHGAP10; the interaction connects the endoplasmic reticulum (ER) with the endosomal tubule. Interacts (via FFAT-like motif) with VAPA (via MSP domain) or VAPB (via MSP domain); the interaction connects the ER with the endosomal tubule. Does not bind to RAB7, RAB10, RAB14, RAB35 and RAB8A. Phosphorylated by ATK1; the phosphorylation stabilizes its interaction with RAB11A and RAB11B.

The protein resides in the cytoplasm. Its subcellular location is the cytosol. It is found in the perinuclear region. The protein localises to the endosome membrane. It localises to the golgi apparatus. The protein resides in the trans-Golgi network. Downstream effector for Rab11 which regulates Rab11 intracellular membrane trafficking functions such as endocytic recycling, intracellular ciliogenesis and protein export. ATK1-mediated phosphorylation of WDR44 induces binding to Rab11 which activates endocytic recycling of transferrin receptor back to the plasma membrane. When bound to Rab11, prevents the formation of the ciliogenic Rab11-Rabin8/RAB3IP-RAB11FIP3 complex, therefore inhibiting preciliary trafficking and ciliogenesis. Participates in neo-synthesized protein export by connecting the endoplasmic reticulum (ER) with the endosomal tubule via direct interactions with the integral ER proteins VAPA or VAPB and the endosomal protein GRAFs (GRAF1/ARHGAP26 or GRAF2/ARHGAP10), which facilitates the transfer of proteins such as E-cadherin, MPP14 and CFTR into a Rab8-Rab10-Rab11-dependent export route. This is WD repeat-containing protein 44 from Homo sapiens (Human).